A 129-amino-acid polypeptide reads, in one-letter code: Small ribosomal subunit protein uS11 (129 aa).

Belongs to the universal ribosomal protein uS11 family. As to quaternary structure, part of the 30S ribosomal subunit. Interacts with proteins S7 and S18. Binds to IF-3.

In terms of biological role, located on the platform of the 30S subunit, it bridges several disparate RNA helices of the 16S rRNA. Forms part of the Shine-Dalgarno cleft in the 70S ribosome. This chain is Small ribosomal subunit protein uS11, found in Nitratidesulfovibrio vulgaris (strain DSM 19637 / Miyazaki F) (Desulfovibrio vulgaris).